Consider the following 940-residue polypeptide: Chromatin assembly factor 1 subunit FSM (940 aa).

3 disordered regions span residues 317-473 (NVDD…DPCT), 638-682 (VDSD…FFVP), and 919-940 (KTTQNVNGDTDIPRINLLPSSQ). A compositionally biased stretch (polar residues) spans 320–329 (DSQLQKNTST). Residues 329–439 (TNEKDTQKAQ…LKKQLAIQKQ (111 aa)) are a coiled coil. The segment covering 330–429 (NEKDTQKAQK…QKRREKEAVQ (100 aa)) has biased composition (basic and acidic residues). Low complexity predominate over residues 430 to 440 (LKKQLAIQKQA). The span at 445–461 (RFFKNKKDSEKLEKPGG) shows a compositional bias: basic and acidic residues. Acidic residues predominate over residues 638 to 650 (VDSDDEWEEEDPG).

Belongs to the CHAF1A family. Component of the chromatin assembly factor 1 (CAF-1) complex, composed of FSM (FAS1), FAS2 and MSI1. In terms of tissue distribution, in embryo, expressed in leaf primordia, coleoptile and radicle. In seedlings, expressed in cell division zone of roots, SAM and leaf primordia. Expressed in floral organ primordia.

The protein localises to the nucleus. In terms of biological role, component of the chromatin assembly factor complex (CAF-1) involved in chromatin assembly following DNA replication and DNA repair. Required for several aspects of development, including apical meristem maintenance by regulating the durations of the S- and G2-phases of the cell cycle through its chromatin assembly activity. The sequence is that of Chromatin assembly factor 1 subunit FSM (FSM) from Oryza sativa subsp. japonica (Rice).